A 76-amino-acid chain; its full sequence is uncharacterized protein (76 aa).

This is an uncharacterized protein from Methanocaldococcus jannaschii (strain ATCC 43067 / DSM 2661 / JAL-1 / JCM 10045 / NBRC 100440) (Methanococcus jannaschii).